Here is a 208-residue protein sequence, read N- to C-terminus: V-type ATP synthase subunit D (208 aa).

The protein belongs to the V-ATPase D subunit family.

Functionally, produces ATP from ADP in the presence of a proton gradient across the membrane. The sequence is that of V-type ATP synthase subunit D from Streptococcus pyogenes serotype M3 (strain ATCC BAA-595 / MGAS315).